We begin with the raw amino-acid sequence, 805 residues long: U-box domain-containing protein 32 (805 aa).

Disordered regions lie at residues 181-205 and 226-284; these read SNNR…SEKL and EKDT…EREG. A compositionally biased stretch (basic and acidic residues) spans 226 to 239; it reads EKDTGQLEREKVEP. The span at 245 to 257 shows a compositional bias: low complexity; the sequence is FSSGSSSSFGEPV. Positions 331–434 form a coiled coil; that stretch reads LEGLCIKESS…EVNALRRLVK (104 aa). One can recognise a Protein kinase domain in the interval 460–718; that stretch reads FDPSWKLGEG…FIDRMKAPEV (259 aa). ATP-binding positions include 466 to 474 and Lys-487; that span reads LGEGKYGSV. One can recognise a U-box domain in the interval 734-805; the sequence is RPPSHYLCPI…LAIQDWQNQW (72 aa).

This sequence belongs to the protein kinase superfamily. Ser/Thr protein kinase family.

The enzyme catalyses S-ubiquitinyl-[E2 ubiquitin-conjugating enzyme]-L-cysteine + [acceptor protein]-L-lysine = [E2 ubiquitin-conjugating enzyme]-L-cysteine + N(6)-ubiquitinyl-[acceptor protein]-L-lysine.. The protein operates within protein modification; protein ubiquitination. Its function is as follows. Functions as an E3 ubiquitin ligase. This Arabidopsis thaliana (Mouse-ear cress) protein is U-box domain-containing protein 32 (PUB32).